The primary structure comprises 203 residues: Mpv17-like protein (203 aa).

Over 1–12 the chain is Cytoplasmic; that stretch reads MRILIQFTKRHP. A helical transmembrane segment spans residues 13-30; sequence WLTNVTIYGSLFASADIV. Over 31–49 the chain is Lumenal; the sequence is QQKLSKSPTEPIDFKQTAK. The chain crosses the membrane as a helical span at residues 50-69; it reads VGLVGFCFHANFNFFWLRFI. At 70-89 the chain is on the cytoplasmic side; sequence ERTFPGSAPLNVIRKVACDQ. Residues 90-107 traverse the membrane as a helical segment; it reads LMAAPITISAFYTGLSLL. The Lumenal portion of the chain corresponds to 108–143; the sequence is DGERDVFKNLKEKFWPTYKTGVMCWTVFQTINFSVI. Residues 144-166 traverse the membrane as a helical segment; that stretch reads PPFVRTAYIGVCAFLWTTFLCYI. At 167-203 the chain is on the cytoplasmic side; sequence RNRDINEVTTRLLHAVPNIRGKMAFPQDQDDNKPADK.

It belongs to the peroxisomal membrane protein PXMP2/4 family.

It localises to the peroxisome membrane. Functionally, participates in reactive oxygen species metabolism by up- or down-regulation of the genes of antioxidant enzymes. Protective against the mitochondrial apoptotic cascade. The polypeptide is Mpv17-like protein (mpv17l) (Xenopus laevis (African clawed frog)).